Reading from the N-terminus, the 395-residue chain is tRNA-specific 2-thiouridylase MnmA (395 aa).

Residues 7 to 14 (GLSGGVDS) and methionine 33 each bind ATP. An interaction with target base in tRNA region spans residues 95–97 (NPD). Cysteine 100 serves as the catalytic Nucleophile. A disulfide bond links cysteine 100 and cysteine 200. Residue glycine 124 participates in ATP binding. Positions 150–152 (KDQ) are interaction with tRNA. Cysteine 200 (cysteine persulfide intermediate) is an active-site residue. The segment at 346-347 (RY) is interaction with tRNA.

Belongs to the MnmA/TRMU family.

It localises to the cytoplasm. The enzyme catalyses S-sulfanyl-L-cysteinyl-[protein] + uridine(34) in tRNA + AH2 + ATP = 2-thiouridine(34) in tRNA + L-cysteinyl-[protein] + A + AMP + diphosphate + H(+). Its function is as follows. Catalyzes the 2-thiolation of uridine at the wobble position (U34) of tRNA, leading to the formation of s(2)U34. This is tRNA-specific 2-thiouridylase MnmA from Flavobacterium johnsoniae (strain ATCC 17061 / DSM 2064 / JCM 8514 / BCRC 14874 / CCUG 350202 / NBRC 14942 / NCIMB 11054 / UW101) (Cytophaga johnsonae).